A 432-amino-acid chain; its full sequence is Trigger factor (432 aa).

The PPIase FKBP-type domain maps to 161-246 (DDRVTIDFVG…LKKIENMVLP (86 aa)).

Belongs to the FKBP-type PPIase family. Tig subfamily.

The protein localises to the cytoplasm. The enzyme catalyses [protein]-peptidylproline (omega=180) = [protein]-peptidylproline (omega=0). Functionally, involved in protein export. Acts as a chaperone by maintaining the newly synthesized protein in an open conformation. Functions as a peptidyl-prolyl cis-trans isomerase. The chain is Trigger factor from Haemophilus influenzae (strain 86-028NP).